Reading from the N-terminus, the 139-residue chain is Putative pre-16S rRNA nuclease (139 aa).

The protein belongs to the YqgF nuclease family.

The protein resides in the cytoplasm. Could be a nuclease involved in processing of the 5'-end of pre-16S rRNA. This chain is Putative pre-16S rRNA nuclease, found in Streptococcus thermophilus (strain ATCC BAA-491 / LMD-9).